Here is a 301-residue protein sequence, read N- to C-terminus: D-alanine--D-alanine ligase (301 aa).

An ATP-grasp domain is found at 102–295 (KAVFAAAGLP…FPALCAWMVE (194 aa)). 128 to 181 (PLPRPYVIKPVNEGSSVGVFILREGDNRRADIARAWRHGSVAMTEEYVPGRELT) is a binding site for ATP. Mg(2+)-binding residues include aspartate 248, glutamate 262, and asparagine 264.

It belongs to the D-alanine--D-alanine ligase family. It depends on Mg(2+) as a cofactor. Mn(2+) is required as a cofactor.

Its subcellular location is the cytoplasm. The catalysed reaction is 2 D-alanine + ATP = D-alanyl-D-alanine + ADP + phosphate + H(+). It functions in the pathway cell wall biogenesis; peptidoglycan biosynthesis. Its function is as follows. Cell wall formation. This is D-alanine--D-alanine ligase from Acidiphilium cryptum (strain JF-5).